The following is a 383-amino-acid chain: Nuclear hormone receptor family member nhr-217 (383 aa).

The nuclear receptor DNA-binding region spans 53 to 127 (IPACPVCDVP…AGLQRDYVRQ (75 aa)). 2 NR C4-type zinc fingers span residues 56 to 77 (CPVC…CAAC) and 93 to 109 (CKRE…CRAC). In terms of domain architecture, NR LBD spans 172–383 (ILKVSNSSLF…KLYVQIGIPF (212 aa)).

The protein belongs to the nuclear hormone receptor family.

It localises to the nucleus. Orphan nuclear receptor. The polypeptide is Nuclear hormone receptor family member nhr-217 (nhr-217) (Caenorhabditis elegans).